We begin with the raw amino-acid sequence, 350 residues long: Phosphoribosylformylglycinamidine cyclo-ligase (350 aa).

Belongs to the AIR synthase family.

It localises to the cytoplasm. The enzyme catalyses 2-formamido-N(1)-(5-O-phospho-beta-D-ribosyl)acetamidine + ATP = 5-amino-1-(5-phospho-beta-D-ribosyl)imidazole + ADP + phosphate + H(+). It participates in purine metabolism; IMP biosynthesis via de novo pathway; 5-amino-1-(5-phospho-D-ribosyl)imidazole from N(2)-formyl-N(1)-(5-phospho-D-ribosyl)glycinamide: step 2/2. In Nitratidesulfovibrio vulgaris (strain DSM 19637 / Miyazaki F) (Desulfovibrio vulgaris), this protein is Phosphoribosylformylglycinamidine cyclo-ligase.